The primary structure comprises 555 residues: Glucose-6-phosphate isomerase (555 aa).

D-glucose 6-phosphate-binding positions include 169–170 (GS), 219–224 (SKTFTT), Q364, E368, H399, and K521. E368 serves as the catalytic Proton donor. Active-site residues include H399 and K521.

The protein belongs to the GPI family. In terms of assembly, homodimer.

The protein resides in the cytoplasm. Its subcellular location is the cytosol. It carries out the reaction alpha-D-glucose 6-phosphate = beta-D-fructose 6-phosphate. The protein operates within carbohydrate degradation; glycolysis; D-glyceraldehyde 3-phosphate and glycerone phosphate from D-glucose: step 2/4. In terms of biological role, in the cytoplasm, catalyzes the conversion of glucose-6-phosphate to fructose-6-phosphate, the second step in glycolysis, and the reverse reaction during gluconeogenesis. The protein is Glucose-6-phosphate isomerase (PGI1) of Candida glabrata (strain ATCC 2001 / BCRC 20586 / JCM 3761 / NBRC 0622 / NRRL Y-65 / CBS 138) (Yeast).